Here is a 587-residue protein sequence, read N- to C-terminus: MNVTAHIEALTHWVAAIAQSLAANGVKDVVVCPGSRSTPLALAVARHPSLRVWMHLDERSAGFFALGMARARGMPAAVLCTSGTAVANLLPAVVEANLARVPLVILTADRPPELRDNGAPQTIDQIGIFGRNVRWFVDLPTPDMALLPFLRATLGRAVGLARSAPAGPVHLNLPFREPLVPDRARMAALFSETPSAVQVTPARRMIGGAELAMLATSLVEYRRGLIIAGPDCPPDLGPLLTTLAHRLRYPILADPLSGVRYGPHVDEYTLGTYDAFLRDERFVSSYAPEVVLRFGAMPTSKPLLLYLQHHPHARQIVIDGGAGWREPTSLAREHLHVDEHWFCIALADALASSQREGPTLWLRAWVSAEQTARTIIQSHLLPQEHISEPGLFARLGSWLPAGATLFVGNSMPVRDCDTFLGPRTNPLYVVGNRGANGIDGLVSTALGLAAGQARPLVMALGDLSLLHDSNGLLAARLHRLDATILLINNDGGGIFSFLPQASETDQFELLFGTPHGVDFAPLAAMHNAHYTLATDWSAVHEALQASFTGGLHLIEVRTRRDQNVIDHRTIWPLVSNALAQAGITVAE.

This sequence belongs to the TPP enzyme family. MenD subfamily. As to quaternary structure, homodimer. It depends on Mg(2+) as a cofactor. Mn(2+) serves as cofactor. Thiamine diphosphate is required as a cofactor.

The catalysed reaction is isochorismate + 2-oxoglutarate + H(+) = 5-enolpyruvoyl-6-hydroxy-2-succinyl-cyclohex-3-ene-1-carboxylate + CO2. Its pathway is quinol/quinone metabolism; 1,4-dihydroxy-2-naphthoate biosynthesis; 1,4-dihydroxy-2-naphthoate from chorismate: step 2/7. It participates in quinol/quinone metabolism; menaquinone biosynthesis. In terms of biological role, catalyzes the thiamine diphosphate-dependent decarboxylation of 2-oxoglutarate and the subsequent addition of the resulting succinic semialdehyde-thiamine pyrophosphate anion to isochorismate to yield 2-succinyl-5-enolpyruvyl-6-hydroxy-3-cyclohexene-1-carboxylate (SEPHCHC). The chain is 2-succinyl-5-enolpyruvyl-6-hydroxy-3-cyclohexene-1-carboxylate synthase from Chloroflexus aurantiacus (strain ATCC 29366 / DSM 635 / J-10-fl).